A 382-amino-acid polypeptide reads, in one-letter code: Alkanesulfonate monooxygenase (382 aa).

The protein belongs to the SsuD family.

It catalyses the reaction an alkanesulfonate + FMNH2 + O2 = an aldehyde + FMN + sulfite + H2O + 2 H(+). Functionally, catalyzes the desulfonation of aliphatic sulfonates. In Pseudomonas putida (strain W619), this protein is Alkanesulfonate monooxygenase.